The primary structure comprises 221 residues: PKHD-type hydroxylase PMT9312_1262 (221 aa).

The Fe2OG dioxygenase domain maps to 80–174; the sequence is IIHGIMFTKS…RLVCVGWIES (95 aa). Positions 98, 100, and 155 each coordinate Fe cation. Arg165 contacts 2-oxoglutarate.

Fe(2+) serves as cofactor. The cofactor is L-ascorbate.

The polypeptide is PKHD-type hydroxylase PMT9312_1262 (Prochlorococcus marinus (strain MIT 9312)).